We begin with the raw amino-acid sequence, 315 residues long: Thioredoxin reductase (315 aa).

45 to 52 (EGSTPGGK) is an FAD binding site. Cys145 and Cys148 form a disulfide bridge. 288–297 (DCRSKHFRQI) is a binding site for FAD.

This sequence belongs to the class-II pyridine nucleotide-disulfide oxidoreductase family. In terms of assembly, homodimer. FAD is required as a cofactor.

The protein localises to the cytoplasm. The catalysed reaction is [thioredoxin]-dithiol + NADP(+) = [thioredoxin]-disulfide + NADPH + H(+). This chain is Thioredoxin reductase (trxB), found in Mycoplasma pneumoniae (strain ATCC 29342 / M129 / Subtype 1) (Mycoplasmoides pneumoniae).